Consider the following 354-residue polypeptide: Phosphate acyltransferase (354 aa).

This sequence belongs to the PlsX family. Homodimer. Probably interacts with PlsY.

Its subcellular location is the cytoplasm. It catalyses the reaction a fatty acyl-[ACP] + phosphate = an acyl phosphate + holo-[ACP]. The protein operates within lipid metabolism; phospholipid metabolism. Catalyzes the reversible formation of acyl-phosphate (acyl-PO(4)) from acyl-[acyl-carrier-protein] (acyl-ACP). This enzyme utilizes acyl-ACP as fatty acyl donor, but not acyl-CoA. The chain is Phosphate acyltransferase from Bordetella petrii (strain ATCC BAA-461 / DSM 12804 / CCUG 43448).